We begin with the raw amino-acid sequence, 208 residues long: MSLQRTGEVHRVTKETNVTVRLGLDGKGKCKISTGVAFLDHMLQQLSSHGLFDLEVIAKGDTHIDDHHTNEDVGIAIGQALSESLGERQGINRFGHFSAPLDEALVQVVLDCSGRPHLSYGLNIPSQRIGSYETELVKEFFIAVVNNSGLTLHIRQLDGTNSHHIVEACFKAFARALRLATELDPRRGDAIPSSKGVLEQAGSKPKQI.

Belongs to the imidazoleglycerol-phosphate dehydratase family.

It localises to the cytoplasm. The catalysed reaction is D-erythro-1-(imidazol-4-yl)glycerol 3-phosphate = 3-(imidazol-4-yl)-2-oxopropyl phosphate + H2O. Its pathway is amino-acid biosynthesis; L-histidine biosynthesis; L-histidine from 5-phospho-alpha-D-ribose 1-diphosphate: step 6/9. This chain is Imidazoleglycerol-phosphate dehydratase, found in Prochlorococcus marinus (strain MIT 9211).